The following is a 714-amino-acid chain: Fatty acid oxidation complex subunit alpha (714 aa).

The segment at Met1 to Pro190 is enoyl-CoA hydratase. Residues Gly306–Thr714 form a 3-hydroxyacyl-CoA dehydrogenase region.

It in the N-terminal section; belongs to the enoyl-CoA hydratase/isomerase family. In the central section; belongs to the 3-hydroxyacyl-CoA dehydrogenase family. Heterotetramer of two alpha chains (FadJ) and two beta chains (FadI).

It localises to the cytoplasm. The catalysed reaction is a (3S)-3-hydroxyacyl-CoA = a (2E)-enoyl-CoA + H2O. It carries out the reaction a 4-saturated-(3S)-3-hydroxyacyl-CoA = a (3E)-enoyl-CoA + H2O. The enzyme catalyses a (3S)-3-hydroxyacyl-CoA + NAD(+) = a 3-oxoacyl-CoA + NADH + H(+). It catalyses the reaction (3S)-3-hydroxybutanoyl-CoA = (3R)-3-hydroxybutanoyl-CoA. The protein operates within lipid metabolism; fatty acid beta-oxidation. Functionally, catalyzes the formation of a hydroxyacyl-CoA by addition of water on enoyl-CoA. Also exhibits 3-hydroxyacyl-CoA epimerase and 3-hydroxyacyl-CoA dehydrogenase activities. The sequence is that of Fatty acid oxidation complex subunit alpha from Klebsiella pneumoniae (strain 342).